A 473-amino-acid polypeptide reads, in one-letter code: Photosystem II CP43 reaction center protein (473 aa).

The propeptide occupies 1–14 (MKTLYSLRRFYPVE). Thr-15 carries the post-translational modification N-acetylthreonine. Thr-15 is subject to Phosphothreonine. The next 5 membrane-spanning stretches (helical) occupy residues 69 to 93 (LFEV…PHLA), 134 to 155 (LLGP…KDRN), 178 to 200 (KALY…RKIT), 255 to 275 (KPFA…LSYS), and 291 to 312 (WFNN…ASQA). Glu-367 is a binding site for [CaMn4O5] cluster. The helical transmembrane segment at 447-471 (RARAAAAGFEKGIDRDFEPALSMTP) threads the bilayer.

The protein belongs to the PsbB/PsbC family. PsbC subfamily. As to quaternary structure, PSII is composed of 1 copy each of membrane proteins PsbA, PsbB, PsbC, PsbD, PsbE, PsbF, PsbH, PsbI, PsbJ, PsbK, PsbL, PsbM, PsbT, PsbX, PsbY, PsbZ, Psb30/Ycf12, at least 3 peripheral proteins of the oxygen-evolving complex and a large number of cofactors. It forms dimeric complexes. Binds multiple chlorophylls and provides some of the ligands for the Ca-4Mn-5O cluster of the oxygen-evolving complex. It may also provide a ligand for a Cl- that is required for oxygen evolution. PSII binds additional chlorophylls, carotenoids and specific lipids. is required as a cofactor.

The protein resides in the plastid. It localises to the chloroplast thylakoid membrane. One of the components of the core complex of photosystem II (PSII). It binds chlorophyll and helps catalyze the primary light-induced photochemical processes of PSII. PSII is a light-driven water:plastoquinone oxidoreductase, using light energy to abstract electrons from H(2)O, generating O(2) and a proton gradient subsequently used for ATP formation. The sequence is that of Photosystem II CP43 reaction center protein from Oenothera argillicola (Appalachian evening primrose).